A 472-amino-acid polypeptide reads, in one-letter code: Cell division protein FtsP (472 aa).

Positions 1-27 form a signal peptide, tat-type signal; the sequence is MSLSRRQFIQASGIALCAGAMPLTARA.

It belongs to the FtsP family. Post-translationally, predicted to be exported by the Tat system. The position of the signal peptide cleavage has not been experimentally proven.

It is found in the periplasm. Cell division protein that is required for growth during stress conditions. May be involved in protecting or stabilizing the divisomal assembly under conditions of stress. The sequence is that of Cell division protein FtsP from Dickeya dadantii (strain 3937) (Erwinia chrysanthemi (strain 3937)).